The primary structure comprises 85 residues: Sec-independent protein translocase protein TatA (85 aa).

A helical membrane pass occupies residues 7-27 (VFGSLGWTEILLILFIALLLF). The interval 50–85 (LTGESDDSSQQISQEQERSVPKEETKTSKSKKSKSA) is disordered. Positions 64–76 (EQERSVPKEETKT) are enriched in basic and acidic residues.

It belongs to the TatA/E family. In terms of assembly, forms a complex with TatC.

It is found in the cell inner membrane. In terms of biological role, part of the twin-arginine translocation (Tat) system that transports large folded proteins containing a characteristic twin-arginine motif in their signal peptide across membranes. TatA could form the protein-conducting channel of the Tat system. The chain is Sec-independent protein translocase protein TatA from Leptospira interrogans serogroup Icterohaemorrhagiae serovar Lai (strain 56601).